The sequence spans 448 residues: Putative carbonic anhydrase 2 (448 aa).

The Alpha-carbonic anhydrase domain maps to 1-222 (AYRQTENLLY…PAERDVFRII (222 aa)). His19 contributes to the Zn(2+) binding site. Asn139 and Asn198 each carry an N-linked (GlcNAc...) asparagine glycan. The segment at 229–448 (RREEDDERGD…DKGDDKGDDN (220 aa)) is disordered. A compositionally biased stretch (acidic residues) spans 245–280 (DDDDNYDDDDYYNDDYSNDDYYDDDYYYDDYDDDTD). Basic and acidic residues-rich tracts occupy residues 281-334 (DDHK…DDSG) and 342-354 (RDGR…RDRN). The N-linked (GlcNAc...) asparagine glycan is linked to Asn314. Residues 357 to 368 (NGNGRENGGVRG) show a composition bias toward gly residues. Residues 370–379 (GNDRDGRRDN) show a composition bias toward basic and acidic residues. Asn385 is a glycosylation site (N-linked (GlcNAc...) asparagine). A compositionally biased stretch (basic and acidic residues) spans 386–421 (GTRRGNGDDRGGRRNEDRGENRRGKDDQERESEDGR). A compositionally biased stretch (basic residues) spans 422 to 435 (RRRRRFNGRRRRRG). The segment covering 436-448 (RGDDKGDDKGDDN) has biased composition (basic and acidic residues).

The protein belongs to the alpha-carbonic anhydrase family. In terms of tissue distribution, component of the acid-insoluble and acid-soluble organic matrix of calcified layers of the shell (at protein level).

It is found in the secreted. The enzyme catalyses hydrogencarbonate + H(+) = CO2 + H2O. Reversible hydration of carbon dioxide. In Lottia gigantea (Giant owl limpet), this protein is Putative carbonic anhydrase 2.